Reading from the N-terminus, the 276-residue chain is NH(3)-dependent NAD(+) synthetase (276 aa).

An ATP-binding site is contributed by 43 to 50 (GISGGVDS). Asp49 lines the Mg(2+) pocket. Arg146 is a binding site for deamido-NAD(+). Thr166 provides a ligand contact to ATP. Glu171 is a binding site for Mg(2+). Deamido-NAD(+)-binding residues include Lys179 and Asp186. The ATP site is built by Lys195 and Thr217. Residue 266–267 (HK) coordinates deamido-NAD(+).

It belongs to the NAD synthetase family. In terms of assembly, homodimer.

The enzyme catalyses deamido-NAD(+) + NH4(+) + ATP = AMP + diphosphate + NAD(+) + H(+). The protein operates within cofactor biosynthesis; NAD(+) biosynthesis; NAD(+) from deamido-NAD(+) (ammonia route): step 1/1. Its function is as follows. Catalyzes the ATP-dependent amidation of deamido-NAD to form NAD. Uses ammonia as a nitrogen source. The polypeptide is NH(3)-dependent NAD(+) synthetase (Aliivibrio salmonicida (strain LFI1238) (Vibrio salmonicida (strain LFI1238))).